Here is a 167-residue protein sequence, read N- to C-terminus: MANPIEEILGTAAAIAKGMGITFKEMMGPTVTDDYPDAPPKFEERFRGVHVLQRDVNGMEKCVACFLCAAACPSNCIYIEAAENTDKIRMSGGERYAKVYNIDYNRCIFCGYCVEACPTDAITHGHGFEAASYNTSTLVKRKEDMLVPVPPGAKPPSMADEVPAGAH.

4Fe-4S ferredoxin-type domains are found at residues 52–82 (LQRD…IEAA) and 98–127 (KVYN…HGHG). Cysteine 62, cysteine 65, cysteine 68, cysteine 72, cysteine 107, cysteine 110, cysteine 113, and cysteine 117 together coordinate [4Fe-4S] cluster. A disordered region spans residues 148–167 (PVPPGAKPPSMADEVPAGAH).

The protein belongs to the complex I 23 kDa subunit family. NDH-1 is composed of 14 different subunits. Subunits NuoA, H, J, K, L, M, N constitute the membrane sector of the complex. [4Fe-4S] cluster is required as a cofactor.

The protein localises to the cell inner membrane. It catalyses the reaction a quinone + NADH + 5 H(+)(in) = a quinol + NAD(+) + 4 H(+)(out). In terms of biological role, NDH-1 shuttles electrons from NADH, via FMN and iron-sulfur (Fe-S) centers, to quinones in the respiratory chain. The immediate electron acceptor for the enzyme in this species is believed to be ubiquinone. Couples the redox reaction to proton translocation (for every two electrons transferred, four hydrogen ions are translocated across the cytoplasmic membrane), and thus conserves the redox energy in a proton gradient. This is NADH-quinone oxidoreductase subunit I 1 from Solibacter usitatus (strain Ellin6076).